Here is a 146-residue protein sequence, read N- to C-terminus: Small ribosomal subunit protein eS17 (146 aa).

It belongs to the eukaryotic ribosomal protein eS17 family. As to quaternary structure, component of the small ribosomal subunit (SSU). Mature N.crassa ribosomes consist of a small (40S) and a large (60S) subunit. The 40S small subunit contains 1 molecule of ribosomal RNA (18S rRNA) and at least 32 different proteins. The large 60S subunit contains 3 rRNA molecules (26S, 5.8S and 5S rRNA) and at least 42 different proteins.

Its subcellular location is the cytoplasm. Functionally, component of the ribosome, a large ribonucleoprotein complex responsible for the synthesis of proteins in the cell. The small ribosomal subunit (SSU) binds messenger RNAs (mRNAs) and translates the encoded message by selecting cognate aminoacyl-transfer RNA (tRNA) molecules. The large subunit (LSU) contains the ribosomal catalytic site termed the peptidyl transferase center (PTC), which catalyzes the formation of peptide bonds, thereby polymerizing the amino acids delivered by tRNAs into a polypeptide chain. The nascent polypeptides leave the ribosome through a tunnel in the LSU and interact with protein factors that function in enzymatic processing, targeting, and the membrane insertion of nascent chains at the exit of the ribosomal tunnel. In Neurospora crassa (strain ATCC 24698 / 74-OR23-1A / CBS 708.71 / DSM 1257 / FGSC 987), this protein is Small ribosomal subunit protein eS17 (rps-17).